We begin with the raw amino-acid sequence, 180 residues long: MAEERAPRGRDRDRNREEKVDDGMIEKLVAVNRVSKTVKGGRQFTFTALTVVGDGLGKVGFGYGKAREVPVAIQKSMEQARKNLATVDLNNGTLWHAVKSGHGAARVYMQPASEGTGVIAGGAMRAVLEAVGVKNVLAKAVGSRNPINLVRATLKGLSEVQSPARVAAKRGKKVEELNHG.

One can recognise an S5 DRBM domain in the interval 24-87 (MIEKLVAVNR…EQARKNLATV (64 aa)).

Belongs to the universal ribosomal protein uS5 family. In terms of assembly, part of the 30S ribosomal subunit. Contacts proteins S4 and S8.

In terms of biological role, with S4 and S12 plays an important role in translational accuracy. Functionally, located at the back of the 30S subunit body where it stabilizes the conformation of the head with respect to the body. This Xanthomonas axonopodis pv. citri (strain 306) protein is Small ribosomal subunit protein uS5.